We begin with the raw amino-acid sequence, 181 residues long: Oligoribonuclease (181 aa).

The region spanning 8–171 (LIWIDLEMTG…DDIRESVAEL (164 aa)) is the Exonuclease domain. Tyrosine 129 is an active-site residue.

It belongs to the oligoribonuclease family.

The protein localises to the cytoplasm. 3'-to-5' exoribonuclease specific for small oligoribonucleotides. In Enterobacter sp. (strain 638), this protein is Oligoribonuclease.